Here is a 1627-residue protein sequence, read N- to C-terminus: Adhesin P1 (1627 aa).

The signal sequence occupies residues 1 to 59 (MHQTKKTALSKSTWILILTATASLATGLTVVGHFTSTTTTLKRQQFSYTRPDEVALRHT). Disordered regions lie at residues 219–238 (LPQQRTESGQNTSTTGAMFG), 252–355 (NEKL…PWRP), 898–953 (WRND…TTQD), and 1274–1362 (SFGT…TGND). Residues 224–234 (TESGQNTSTTG) show a composition bias toward polar residues. Over residues 261–276 (TGSSTTSGSGQSTQRG) the composition is skewed to low complexity. Positions 282–297 (TKVKALKIEVKKKSDS) are enriched in basic and acidic residues. Polar residues-rich tracts occupy residues 903–933 (ASSGQSDENHTKFTSATGMDQQGQSGTSAGN), 939–953 (QDNISKSGDSLTTQD), and 1274–1297 (SFGTDHSTQPQPQSLKTTTPVFGT). Gly residues predominate over residues 1307–1320 (SGGGAGGGSSGSGQ). Positions 1341–1352 (STSDGNTSSTNN) are enriched in low complexity. Positions 1403–1415 (GPQSVKFKSPDQI) are cytadherence epitope. Residues 1527 to 1547 (AITVPIVVIVLSVTLGLAIGI) traverse the membrane as a helical segment. The segment at 1589-1627 (QAPKRLKQTSAAKPGAPRPPVPPKPGAPKPPVQPPKKPA) is disordered. The span at 1604–1627 (APRPPVPPKPGAPKPPVQPPKKPA) shows a compositional bias: pro residues.

Belongs to the adhesin P1 family.

The protein localises to the cell membrane. The protein resides in the cell projection. Its subcellular location is the attachment organelle. It localises to the cell surface. In terms of biological role, the protein is the major adhesin mediating the attachment of this mycoplasma to respiratory epithelium. This chain is Adhesin P1 (mgpA), found in Mycoplasma pneumoniae (strain ATCC 29342 / M129 / Subtype 1) (Mycoplasmoides pneumoniae).